Reading from the N-terminus, the 465-residue chain is Spermidine/putrescine import ATP-binding protein PotA (465 aa).

The segment covering 1-18 (MTATSGARTSDARTSGAR) has biased composition (polar residues). The segment at 1-21 (MTATSGARTSDARTSGARTSD) is disordered. The 235-residue stretch at 30 to 264 (IELVGVAKDY…PRTRFVAGFI (235 aa)) folds into the ABC transporter domain. 66–73 (GPSGCGKS) contributes to the ATP binding site.

The protein belongs to the ABC transporter superfamily. Spermidine/putrescine importer (TC 3.A.1.11.1) family. The complex is composed of two ATP-binding proteins (PotA), two transmembrane proteins (PotB and PotC) and a solute-binding protein (PotD).

It is found in the cell membrane. It carries out the reaction ATP + H2O + polyamine-[polyamine-binding protein]Side 1 = ADP + phosphate + polyamineSide 2 + [polyamine-binding protein]Side 1.. In terms of biological role, part of the ABC transporter complex PotABCD involved in spermidine/putrescine import. Responsible for energy coupling to the transport system. In Frankia alni (strain DSM 45986 / CECT 9034 / ACN14a), this protein is Spermidine/putrescine import ATP-binding protein PotA.